The primary structure comprises 59 residues: MAKTIKVTQVRSSIGRLPKHKATLLGLGLRRIGHTVEREDTPALRGMINLVSYMVKVEE.

The protein belongs to the universal ribosomal protein uL30 family. As to quaternary structure, part of the 50S ribosomal subunit.

The sequence is that of Large ribosomal subunit protein uL30 from Buchnera aphidicola subsp. Acyrthosiphon kondoi (Acyrthosiphon kondoi symbiotic bacterium).